A 473-amino-acid chain; its full sequence is Cannabinoid receptor 1 (473 aa).

At 1–121 (MKSILDGLAD…LNPSQQLAIA (121 aa)) the chain is on the extracellular side. Residues 2-23 (KSILDGLADTTFRTITTDLLYV) are required for mitochondrial localization. Residues Asn78 and Asn84 are each glycosylated (N-linked (GlcNAc...) asparagine). The helical transmembrane segment at 122–142 (VLSLTLGTFTVLENLLVLCVI) threads the bilayer. Over 143–155 (LHSRSLRCRPSYH) the chain is Cytoplasmic. Residues 156 to 176 (FIGSLAVADLLGSVIFVYSFV) form a helical membrane-spanning segment. The Extracellular portion of the chain corresponds to 177-188 (DFHVFHRKDSPN). The chain crosses the membrane as a helical span at residues 189–209 (VFLFKLGGVTASFTASVGSLF). Topologically, residues 210–233 (LTAIDRYISIHRPLAYKRIVTRPK) are cytoplasmic. A helical transmembrane segment spans residues 234–254 (AVVAFCLMWTIAIVIAVLPLL). The Extracellular segment spans residues 255–278 (GWNCKKLQSVCSDIFPLIDETYLM). The chain crosses the membrane as a helical span at residues 279 to 299 (FWIGVTSVLLLFIVYAYMYIL). At 300 to 345 (WKAHSHAVRMIQRGTQKSIIIHTSEDGKVQVTRPDQARMDIRLAKT) the chain is on the cytoplasmic side. The chain crosses the membrane as a helical span at residues 346 to 366 (LVLILVVLIICWGPLLAIMVY). Residues 367–378 (DVFGKMNKLIKT) lie on the Extracellular side of the membrane. Residues 379-399 (VFAFCSMLCLLNSTVNPIIYA) traverse the membrane as a helical segment. Over 400–473 (LRSKDLRHAF…VSTDTSAEAL (74 aa)) the chain is Cytoplasmic. Residue Cys416 is the site of S-palmitoyl cysteine attachment. Phosphoserine is present on residues Ser426 and Ser430.

Belongs to the G-protein coupled receptor 1 family. Interacts (via C-terminus) with CNRIP1. Associates with G protein alpha subunits, including G(i) alpha-1/GNAI1, G(i) alpha-3/GNAI3 and G(o)-alpha/GNAO1; palmitoylation is important for interaction with GNAI3 and GNAO1. Post-translationally, palmitoylation at Cys-416 is important for recruitment at both plasma membrane and lipid rafts and association with G protein alpha subunits. As to expression, expressed in brain neurons (at protein level). Detected throughout the striatum, cortex and hippocampus, with highest levels in the lateral striatum. In rostral brain regions, high expression levels in the dorsal lateral striatum, while in the caudal brain regions, high levels are observed in the ventral lateral striatum. Expressed in neurons. In the hypothalamus, expressed in both GABAergic and glutamatergic presynaptic terminals of POMC neurons (at protein level). Expressed in striated muscles, including skeletal muscles (gastrocnemius and rectus abdominis) and myocardium (at protein level). Expressed in the liver, with highest levels in Kupffer cells and lower levels in endothelial cells as well as hepatocytes, particularly in perivascular areas (at protein level). The hepatic expression level is up-regulated in obese mice compared to lean animals.

Its subcellular location is the cell membrane. It localises to the mitochondrion outer membrane. It is found in the cell projection. The protein resides in the axon. The protein localises to the presynapse. Hemopressin, a peptide derived from hemoglobin subunit alpha (HBA1 and/or HBA2), acts as an antagonist peptide: hemopressin-binding efficiently blocks cannabinoid receptor CNR1 and subsequent signaling. Functionally, G-protein coupled receptor for cannabinoids, including endocannabinoids (eCBs), such as N-arachidonoylethanolamide (also called anandamide or AEA) and 2-arachidonoylglycerol (2-AG). Mediates many cannabinoid-induced effects, acting, among others, on food intake, memory loss, gastrointestinal motility, catalepsy, ambulatory activity, anxiety, chronic pain. Signaling typically involves reduction in cyclic AMP. In the hypothalamus, may have a dual effect on mitochondrial respiration depending upon the agonist dose and possibly upon the cell type. Increases respiration at low doses, while decreases respiration at high doses. At high doses, CNR1 signal transduction involves G-protein alpha-i protein activation and subsequent inhibition of mitochondrial soluble adenylate cyclase, decrease in cyclic AMP concentration, inhibition of protein kinase A (PKA)-dependent phosphorylation of specific subunits of the mitochondrial electron transport system, including NDUFS2. In the hypothalamus, inhibits leptin-induced reactive oxygen species (ROS) formation and mediates cannabinoid-induced increase in SREBF1 and FASN gene expression. In response to cannabinoids, drives the release of orexigenic beta-endorphin, but not that of melanocyte-stimulating hormone alpha/alpha-MSH, from hypothalamic POMC neurons, hence promoting food intake. In the hippocampus, regulates cellular respiration and energy production in response to cannabinoids. Involved in cannabinoid-dependent depolarization-induced suppression of inhibition (DSI), a process in which depolarization of CA1 postsynaptic pyramidal neurons mobilizes eCBs, which retrogradely activate presynaptic CB1 receptors, transiently decreasing GABAergic inhibitory neurotransmission. Also reduces excitatory synaptic transmission. In superior cervical ganglions and cerebral vascular smooth muscle cells, inhibits voltage-gated Ca(2+) channels in a constitutive, as well as agonist-dependent manner. In cerebral vascular smooth muscle cells, cannabinoid-induced inhibition of voltage-gated Ca(2+) channels leads to vasodilation and decreased vascular tone. Induces leptin production in adipocytes and reduces LRP2-mediated leptin clearance in the kidney, hence participating in hyperleptinemia. In adipose tissue, CNR1 signaling leads to increased expression of SREBF1, ACACA and FASN genes. In the liver, activation by endocannabinoids leads to increased de novo lipogenesis and reduced fatty acid catabolism, associated with increased expression of SREBF1/SREBP-1, GCK, ACACA, ACACB and FASN genes. May also affect de novo cholesterol synthesis and HDL-cholesteryl ether uptake. Peripherally modulates energy metabolism. In high carbohydrate diet-induced obesity, may decrease the expression of mitochondrial dihydrolipoyl dehydrogenase/DLD in striated muscles, as well as that of selected glucose/ pyruvate metabolic enzymes, hence affecting energy expenditure through mitochondrial metabolism. In response to cannabinoid anandamide, elicits a pro-inflammatory response in macrophages, which involves NLRP3 inflammasome activation and IL1B and IL18 secretion. In macrophages infiltrating pancreatic islets, this process may participate in the progression of type-2 diabetes and associated loss of pancreatic beta-cells. This is Cannabinoid receptor 1 (Cnr1) from Mus musculus (Mouse).